Reading from the N-terminus, the 1691-residue chain is ADAMTS-like protein 3 (1691 aa).

An N-terminal signal peptide occupies residues 1 to 26 (MASWTSPWWVLIGMVFMHSPLPQTTA). A TSP type-1 1 domain is found at 75 to 124 (DGNWDAWGDWSDCSRTCGGGASYSLRRCLTGRNCEGQNIRYKTCSNHDCP). Intrachain disulfides connect C87–C118, C91–C123, and C102–C108. A glycan (N-linked (GlcNAc...) asparagine) is linked at N293. TSP type-1 domains are found at residues 418 to 468 (PLPR…APKP), 478 to 535 (DCPK…IPCY), and 564 to 626 (EEPT…EACD). Disulfide bonds link C576–C620, C580–C625, and C591–C609. An N-linked (GlcNAc...) asparagine glycan is attached at N681. TSP type-1 domains follow at residues 703-760 (CPPR…FDCP), 763-818 (WHIE…ARTD), and 819-881 (CPPH…PECS). The N-linked (GlcNAc...) asparagine glycan is linked to N797. 3 cysteine pairs are disulfide-bonded: C831–C875, C835–C880, and C846–C863. The region spanning 896–992 (PQILSVQRVY…IAGSAQETVV (97 aa)) is the Ig-like C2-type 1 domain. 2 N-linked (GlcNAc...) asparagine glycosylation sites follow: N915 and N927. Residues C934 and C982 are joined by a disulfide bond. An N-linked (GlcNAc...) asparagine glycan is attached at N1102. Residues 1146-1184 (PPAAQLRGETGSVSQSSHAKNSGKLTFKPKGPVLMRQSQ) are disordered. The span at 1156–1169 (GSVSQSSHAKNSGK) shows a compositional bias: polar residues. In terms of domain architecture, Ig-like C2-type 2 spans 1185 to 1279 (PPSISFNKTI…GSDVESSSVL (95 aa)). An N-linked (GlcNAc...) asparagine glycan is attached at N1191. Residues C1215 and C1263 are joined by a disulfide bond. N1292, N1316, N1330, N1343, N1349, N1356, N1432, N1516, N1574, and N1591 each carry an N-linked (GlcNAc...) asparagine glycan. The Ig-like C2-type 3 domain maps to 1296-1378 (PEHNHLSVVV…ATNALGKAVA (83 aa)). C1321 and C1367 are disulfide-bonded. TSP type-1 domains lie at 1424 to 1482 (QEPF…NIRD) and 1483 to 1545 (CPAR…HPCV). Residues 1597-1644 (CDVCWHTGPWKPCTAACGRGFQSRKVDCIHTRSCKPVAKRHCVQKKKP) enclose the TSP type-1 10 domain. Residues 1655-1691 (CDRDCTDTTHYCMFVKHLNLCSLDRYKQRCCQSCQEG) enclose the PLAC domain.

Post-translationally, glycosylated. Can be O-fucosylated by POFUT2 on a serine or a threonine residue found within the consensus sequence C1-X(2)-(S/T)-C2-G of the TSP type-1 repeat domains where C1 and C2 are the first and second cysteine residue of the repeat, respectively. Fucosylated repeats can then be further glycosylated by the addition of a beta-1,3-glucose residue by the glucosyltransferase, B3GALTL. Fucosylation mediates the efficient secretion of ADAMTS family members. Can also be C-glycosylated with one or two mannose molecules on tryptophan residues within the consensus sequence W-X-X-W of the TPRs, and N-glycosylated. These other glycosylations can also facilitate secretion. As to expression, expressed in epithelial cells of the colon, fallopian tube, skin, breast, prostate, epididymis, liver, pancreatic islets and bile ducts, as well as by vascular endothelial cells, smooth muscle cells, fibroblasts, cortical and ganglionic neurons and cardiac myocytes. Also expressed by malignant epithelial cells in colon cancer, as well as breast, prostate, renal and skin tumors. Expression is significantly reduced in colon cancer compared to normal colon.

It is found in the secreted. It localises to the extracellular space. Its subcellular location is the extracellular matrix. The sequence is that of ADAMTS-like protein 3 (ADAMTSL3) from Homo sapiens (Human).